The sequence spans 157 residues: Small ribosomal subunit protein uS7 (157 aa).

It belongs to the universal ribosomal protein uS7 family. As to quaternary structure, part of the 30S ribosomal subunit. Contacts proteins S9 and S11.

One of the primary rRNA binding proteins, it binds directly to 16S rRNA where it nucleates assembly of the head domain of the 30S subunit. Is located at the subunit interface close to the decoding center, probably blocks exit of the E-site tRNA. The polypeptide is Small ribosomal subunit protein uS7 (Caulobacter sp. (strain K31)).